Consider the following 239-residue polypeptide: Vesicle-associated protein 1-3 (239 aa).

At M1 the chain carries N-acetylmethionine. Residue T2 is modified to N-acetylthreonine; in Vesicle-associated protein 1-3, N-terminally processed. The Cytoplasmic segment spans residues 2–215 (TTGDLVNIHP…RKETSKKQSG (214 aa)). In terms of domain architecture, MSP spans 6-127 (LVNIHPTELK…EDFKLRVVYI (122 aa)). Residues S133 and S164 each carry the phosphoserine modification. A coiled-coil region spans residues 179–214 (SMISKLTEEKTSATQQSQKLRLELEMLRKETSKKQS). The helical; Anchor for type IV membrane protein transmembrane segment at 216 to 236 (GHSLLLMLLVGLLGCVIGYLL) threads the bilayer.

The protein belongs to the VAMP-associated protein (VAP) (TC 9.B.17) family.

The protein resides in the endoplasmic reticulum membrane. Functionally, may play a role in vesicle trafficking. In Arabidopsis thaliana (Mouse-ear cress), this protein is Vesicle-associated protein 1-3 (PVA13).